A 295-amino-acid chain; its full sequence is Small ribosomal subunit protein uS2 (295 aa).

Serine 2 is modified (N-acetylserine). At serine 43 the chain carries Phosphoserine. Lysine 52 is modified (N6-acetyllysine). The interval 54–113 (TWEKLLLAARAIVAIENPADVSVISSRNTGQRAVLKFAAATGATPIAGRFTPGTFTNQIQ) is interaction with PPP1R16B. Position 89 is an N6-acetyllysine; alternate (lysine 89). Residue lysine 89 forms a Glycyl lysine isopeptide (Lys-Gly) (interchain with G-Cter in SUMO2); alternate linkage. Threonine 97 is modified (phosphothreonine). Laminin-binding stretches follow at residues 161 to 180 (IPCN…MLAR) and 205 to 229 (RDPE…EFQG). The span at 214–227 (EQAAAEKAVTKEEF) shows a compositional bias: basic and acidic residues. The interval 214 to 240 (EQAAAEKAVTKEEFQGEWTAPAPEFTA) is disordered. [DE]-W-[ST] repeat units lie at residues 230–232 (EWT), 247–249 (DWS), 266–268 (DWS), and 275–277 (DWS). A laminin-binding region spans residues 242–295 (QPEVADWSEGVQVPSVPIQQFPTEDWSARPFTEDWSAAPTAQATEWVGTTSELS). The segment at 263–295 (PTEDWSARPFTEDWSAAPTAQATEWVGTTSELS) is disordered. The span at 280 to 295 (PTAQATEWVGTTSELS) shows a compositional bias: polar residues.

Belongs to the universal ribosomal protein uS2 family. As to quaternary structure, monomer (37LRP) and homodimer (67LR). Component of the small ribosomal subunit. Mature ribosomes consist of a small (40S) and a large (60S) subunit. The 40S subunit contains about 33 different proteins and 1 molecule of RNA (18S). The 60S subunit contains about 49 different proteins and 3 molecules of RNA (28S, 5.8S and 5S). Interacts with RPS21. Interacts with several laminins including at least LAMB1. Interacts with MDK. The mature dimeric form interacts with PPP1R16B (via its fourth ankyrin repeat). Interacts with PPP1CA only in the presence of PPP1R16B. In terms of processing, acylated. Acylation may be a prerequisite for conversion of the monomeric 37 kDa laminin receptor precursor (37LRP) to the mature dimeric 67 kDa laminin receptor (67LR), and may provide a mechanism for membrane association. Post-translationally, cleaved by stromelysin-3 (ST3) at the cell surface. Cleavage by stromelysin-3 may be a mechanism to alter cell-extracellular matrix interactions.

It localises to the cell membrane. It is found in the cytoplasm. Its subcellular location is the nucleus. Required for the assembly and/or stability of the 40S ribosomal subunit. Required for the processing of the 20S rRNA-precursor to mature 18S rRNA in a late step of the maturation of 40S ribosomal subunits. Also functions as a cell surface receptor for laminin. Plays a role in cell adhesion to the basement membrane and in the consequent activation of signaling transduction pathways. May play a role in cell fate determination and tissue morphogenesis. Also acts as a receptor for several other ligands, including the pathogenic prion protein, viruses, and bacteria. Acts as a PPP1R16B-dependent substrate of PPP1CA. This chain is Small ribosomal subunit protein uS2, found in Ovis aries (Sheep).